A 251-amino-acid polypeptide reads, in one-letter code: Probable transcriptional regulatory protein Mflv_3828 (251 aa).

This sequence belongs to the TACO1 family.

The protein resides in the cytoplasm. The polypeptide is Probable transcriptional regulatory protein Mflv_3828 (Mycolicibacterium gilvum (strain PYR-GCK) (Mycobacterium gilvum (strain PYR-GCK))).